A 332-amino-acid chain; its full sequence is L-lactate dehydrogenase A chain (332 aa).

NAD(+) contacts are provided by residues 29 to 57 and arginine 99; that span reads GMVGMASAISVLLKDLCDELALVDVMEDK. Residues arginine 106, asparagine 138, and arginine 169 each contribute to the substrate site. Asparagine 138 is a binding site for NAD(+). The active-site Proton acceptor is histidine 193. Substrate is bound at residue threonine 248.

It belongs to the LDH/MDH superfamily. LDH family. As to quaternary structure, homotetramer.

The protein resides in the cytoplasm. The catalysed reaction is (S)-lactate + NAD(+) = pyruvate + NADH + H(+). It participates in fermentation; pyruvate fermentation to lactate; (S)-lactate from pyruvate: step 1/1. Interconverts simultaneously and stereospecifically pyruvate and lactate with concomitant interconversion of NADH and NAD(+). The chain is L-lactate dehydrogenase A chain (ldha) from Fundulus heteroclitus (Killifish).